We begin with the raw amino-acid sequence, 669 residues long: DNA ligase (669 aa).

Residues 34-38 (DAEYD), 83-84 (SL), and glutamate 114 contribute to the NAD(+) site. Lysine 116 functions as the N6-AMP-lysine intermediate in the catalytic mechanism. NAD(+) is bound by residues arginine 137, glutamate 171, lysine 287, and lysine 311. 4 residues coordinate Zn(2+): cysteine 405, cysteine 408, cysteine 423, and cysteine 428. The region spanning 591–669 (NVESYFAGKT…EERFLQELNK (79 aa)) is the BRCT domain.

It belongs to the NAD-dependent DNA ligase family. LigA subfamily. It depends on Mg(2+) as a cofactor. Mn(2+) is required as a cofactor.

It carries out the reaction NAD(+) + (deoxyribonucleotide)n-3'-hydroxyl + 5'-phospho-(deoxyribonucleotide)m = (deoxyribonucleotide)n+m + AMP + beta-nicotinamide D-nucleotide.. Functionally, DNA ligase that catalyzes the formation of phosphodiester linkages between 5'-phosphoryl and 3'-hydroxyl groups in double-stranded DNA using NAD as a coenzyme and as the energy source for the reaction. It is essential for DNA replication and repair of damaged DNA. This chain is DNA ligase, found in Bacillus cereus (strain G9842).